A 434-amino-acid chain; its full sequence is Vi polysaccharide export inner-membrane protein VexD (434 aa).

A compositionally biased stretch (basic and acidic residues) spans 1–50 (MENSERIKKWKEERAKVAQESRASRLQQKEDERALRQTEKSADAKSHHNP). The interval 1–58 (MENSERIKKWKEERAKVAQESRASRLQQKEDERALRQTEKSADAKSHHNPDAGWSATD) is disordered. The next 2 membrane-spanning stretches (helical) occupy residues 84 to 104 (LFLYIALPLLVIMLMSWILTS) and 409 to 429 (WLLFFVLLGITYLVTSLLITI).

The protein belongs to the BexC/CtrB/KpsE family.

It is found in the cell inner membrane. May form an ATP-driven capsule polysaccharide export apparatus, in association with the VexA, VexB and VexC proteins. This chain is Vi polysaccharide export inner-membrane protein VexD (vexD), found in Salmonella typhi.